Consider the following 44-residue polypeptide: Photosystem II reaction center protein K (44 aa).

A propeptide spanning residues 1–7 (MTTLLLA) is cleaved from the precursor. The helical transmembrane segment at 19-39 (IVDVLPVIPLLFLLLAFVWQA) threads the bilayer.

It belongs to the PsbK family. As to quaternary structure, PSII is composed of 1 copy each of membrane proteins PsbA, PsbB, PsbC, PsbD, PsbE, PsbF, PsbH, PsbI, PsbJ, PsbK, PsbL, PsbM, PsbT, PsbX, PsbY, PsbZ, Psb30/Ycf12, at least 3 peripheral proteins of the oxygen-evolving complex and a large number of cofactors. It forms dimeric complexes.

It is found in the plastid. It localises to the chloroplast thylakoid membrane. In terms of biological role, one of the components of the core complex of photosystem II (PSII). PSII is a light-driven water:plastoquinone oxidoreductase that uses light energy to abstract electrons from H(2)O, generating O(2) and a proton gradient subsequently used for ATP formation. It consists of a core antenna complex that captures photons, and an electron transfer chain that converts photonic excitation into a charge separation. The protein is Photosystem II reaction center protein K of Tupiella akineta (Green alga).